We begin with the raw amino-acid sequence, 386 residues long: MKWLLLISLVALSECAIVKVPLVRKKSLRQNLIEHGLLNDFLKNQSPNPASKYFPQEPTVLATQSLKNYMDMEYFGTIGIGTPPQEFTVIFDTGSSNLWVPSVYCSSPACSNHNRFNPQESSTYQGTNRPVSIAYGTGSMTGILGYDTVQVGGIADTNQIFGLSETEPGSFLYYAPFDGILGLAYPQISASGATPVFDNMWNEGLVSQDLFSVYLSSDDQSGSVVMFGGIDSSYYSGNLNWVPVSVEGYWQITVDSVTMNGQAIACSDGCQAIVDTGTSLLAGPTNAIANIQSYIGASQNSYGQMVISCSAINSLPDIVFTINGIQYPLPPSAYILQSQQGCVSGFQGMNLPTASGELWILGDVFIRQYFAVFDRANNQVGLAPVA.

The signal sequence occupies residues 1–15 (MKWLLLISLVALSEC). Positions 16-60 (AIVKVPLVRKKSLRQNLIEHGLLNDFLKNQSPNPASKYFPQEPTV) are cleaved as a propeptide — activation peptide. Residues 74–383 (YFGTIGIGTP…DRANNQVGLA (310 aa)) enclose the Peptidase A1 domain. Asp92 is an active-site residue. Disulfide bonds link Cys105–Cys110 and Cys266–Cys270. Asp275 is a catalytic residue. The cysteines at positions 309 and 342 are disulfide-linked.

This sequence belongs to the peptidase A1 family.

The protein localises to the secreted. The catalysed reaction is Preferential cleavage: hydrophobic, preferably aromatic, residues in P1 and P1' positions. Cleaves 1-Phe-|-Val-2, 4-Gln-|-His-5, 13-Glu-|-Ala-14, 14-Ala-|-Leu-15, 15-Leu-|-Tyr-16, 16-Tyr-|-Leu-17, 23-Gly-|-Phe-24, 24-Phe-|-Phe-25 and 25-Phe-|-Tyr-26 bonds in the B chain of insulin.. Functionally, shows particularly broad specificity; although bonds involving phenylalanine and leucine are preferred, many others are also cleaved to some extent. This is Pepsin A (PGA) from Canis lupus familiaris (Dog).